A 73-amino-acid polypeptide reads, in one-letter code: uncharacterized protein (73 aa).

The next 2 membrane-spanning stretches (helical) occupy residues 4-24 (LIPVALLTALLAGCAHDSPCV) and 51-71 (AGAIAGGAAAVAGLTMGIIAL).

It localises to the cell membrane. This is an uncharacterized protein from Escherichia coli O157:H7.